Here is a 625-residue protein sequence, read N- to C-terminus: Chaperone protein HtpG (625 aa).

An a; substrate-binding region spans residues 1-341 (MGKRKFKAES…SEDLSLNISR (341 aa)). Residues 342–551 (EMLQHDRQLK…DGEISLEMEK (210 aa)) form a b region. The c stretch occupies residues 552–625 (IINAMPDDQQ…FTNDICKVMV (74 aa)).

This sequence belongs to the heat shock protein 90 family. As to quaternary structure, homodimer.

Its subcellular location is the cytoplasm. Functionally, molecular chaperone. Has ATPase activity. This is Chaperone protein HtpG from Oceanobacillus iheyensis (strain DSM 14371 / CIP 107618 / JCM 11309 / KCTC 3954 / HTE831).